The sequence spans 313 residues: Dimethyladenosine transferase (313 aa).

Residues 1-21 are disordered; the sequence is MPKVKSGAIGRRRGRQEQRRE. Residues His37, Leu39, Gly64, Glu85, Asp113, and Asn128 each contribute to the S-adenosyl-L-methionine site.

This sequence belongs to the class I-like SAM-binding methyltransferase superfamily. rRNA adenine N(6)-methyltransferase family. In terms of assembly, part of the small subunit (SSU) processome, composed of more than 70 proteins and the RNA chaperone small nucleolar RNA (snoRNA) U3.

Its subcellular location is the nucleus. It is found in the nucleoplasm. It localises to the nucleolus. The catalysed reaction is adenosine(1779)/adenosine(1780) in 18S rRNA + 4 S-adenosyl-L-methionine = N(6)-dimethyladenosine(1779)/N(6)-dimethyladenosine(1780) in 18S rRNA + 4 S-adenosyl-L-homocysteine + 4 H(+). Functionally, specifically dimethylates two adjacent adenosines in the loop of a conserved hairpin near the 3'-end of 18S rRNA in the 40S particle. Involved in the pre-rRNA processing steps leading to small-subunit rRNA production independently of its RNA-modifying catalytic activity. Part of the small subunit (SSU) processome, first precursor of the small eukaryotic ribosomal subunit. During the assembly of the SSU processome in the nucleolus, many ribosome biogenesis factors, an RNA chaperone and ribosomal proteins associate with the nascent pre-rRNA and work in concert to generate RNA folding, modifications, rearrangements and cleavage as well as targeted degradation of pre-ribosomal RNA by the RNA exosome. This Homo sapiens (Human) protein is Dimethyladenosine transferase.